Consider the following 301-residue polypeptide: Transcriptional activator FeaR (301 aa).

The HTH araC/xylS-type domain occupies 199 to 299 (QKVVTLIDDN…GMTPGEYRRK (101 aa)). 2 consecutive DNA-binding regions (H-T-H motif) follow at residues 217-238 (EWIA…ADKG) and 266-289 (LAGI…KQRF).

Its function is as follows. Positive regulator of tynA/maoA and feaB/padA, the genes for 2-phenylethylamine catabolism. The chain is Transcriptional activator FeaR (feaR) from Escherichia coli (strain K12).